Consider the following 225-residue polypeptide: Peptidyl-tRNA hydrolase (225 aa).

Residue Y14 coordinates tRNA. The Proton acceptor role is filled by H19. 3 residues coordinate tRNA: F64, N66, and N112. Residues 184-225 form a disordered region; sequence ALRMQPPKPEKPKPAAKAPEAQAPEAAPDARSALQKLADRFR. Residues 198–210 show a composition bias toward low complexity; sequence AAKAPEAQAPEAA.

It belongs to the PTH family. As to quaternary structure, monomer.

It is found in the cytoplasm. It catalyses the reaction an N-acyl-L-alpha-aminoacyl-tRNA + H2O = an N-acyl-L-amino acid + a tRNA + H(+). Functionally, hydrolyzes ribosome-free peptidyl-tRNAs (with 1 or more amino acids incorporated), which drop off the ribosome during protein synthesis, or as a result of ribosome stalling. Catalyzes the release of premature peptidyl moieties from peptidyl-tRNA molecules trapped in stalled 50S ribosomal subunits, and thus maintains levels of free tRNAs and 50S ribosomes. In Cereibacter sphaeroides (strain KD131 / KCTC 12085) (Rhodobacter sphaeroides), this protein is Peptidyl-tRNA hydrolase.